The primary structure comprises 241 residues: 3-oxoacyl-[acyl-carrier-protein] reductase FabG (241 aa).

NADP(+) is bound by residues 13-16 (GASG), Ser-38, 57-58 (EV), and Asn-83. Ser-135 lines the substrate pocket. Tyr-148 serves as the catalytic Proton acceptor. Residues 148-152 (YCASK) and Ile-181 contribute to the NADP(+) site.

Belongs to the short-chain dehydrogenases/reductases (SDR) family. Homotetramer.

The enzyme catalyses a (3R)-hydroxyacyl-[ACP] + NADP(+) = a 3-oxoacyl-[ACP] + NADPH + H(+). It participates in lipid metabolism; fatty acid biosynthesis. In terms of biological role, catalyzes the NADPH-dependent reduction of beta-ketoacyl-ACP substrates to beta-hydroxyacyl-ACP products, the first reductive step in the elongation cycle of fatty acid biosynthesis. In Rickettsia typhi (strain ATCC VR-144 / Wilmington), this protein is 3-oxoacyl-[acyl-carrier-protein] reductase FabG (fabG).